We begin with the raw amino-acid sequence, 316 residues long: Neuroguidin-B (316 aa).

2 disordered regions span residues 124–169 and 292–316; these read ENDP…SKVK and VPFM…RRRH. Residues 145-156 are compositionally biased toward acidic residues; it reads DERESDSGEEGA. A compositionally biased stretch (basic residues) spans 296–316; sequence KKSKKGPKKSKKKKGFSRRRH.

Belongs to the SAS10 family. As to quaternary structure, part of the small subunit (SSU) processome, composed of more than 70 proteins and the RNA chaperone small nucleolar RNA (snoRNA) U3.

The protein localises to the nucleus. It is found in the nucleolus. It localises to the chromosome. The protein resides in the centromere. Its subcellular location is the cytoplasm. The protein localises to the cell projection. It is found in the axon. It localises to the dendrite. The protein resides in the filopodium. In terms of biological role, part of the small subunit (SSU) processome, first precursor of the small eukaryotic ribosomal subunit. During the assembly of the SSU processome in the nucleolus, many ribosome biogenesis factors, an RNA chaperone and ribosomal proteins associate with the nascent pre-rRNA and work in concert to generate RNA folding, modifications, rearrangements and cleavage as well as targeted degradation of pre-ribosomal RNA by the RNA exosome. Its dissociation from the complex determines the transition from state pre-A1 to state pre-A1*. May inhibit mRNA translation. This Xenopus laevis (African clawed frog) protein is Neuroguidin-B (ngdn-b).